The following is a 102-amino-acid chain: Circadian clock oscillator protein KaiA (102 aa).

The KaiA C-terminal domain occupies 1 to 102 (MTQEVDQQIL…CEAYRGAIFK (102 aa)).

The protein belongs to the KaiA family. As to quaternary structure, homodimer. The KaiABC complex composition changes during the circadian cycle to control KaiC phosphorylation. Complexes KaiC(6), KaiA(2-4):KaiC(6), KaiB(6):KaiC(6) and KaiC(6):KaiB(6):KaiA(12) are among the most important forms, many form cooperatively. KaiA and CikA bind to the same region of the KaiB(fs) form and therefore compete.

Its function is as follows. Key component of the KaiABC oscillator complex, which constitutes the main circadian regulator in cyanobacteria. Complex composition changes during the circadian cycle to control KaiC phosphorylation. KaiA stimulates KaiC autophosphorylation, while KaiB sequesters KaiA, leading to KaiC autodephosphorylation. KaiA binding to the KaiC CII domain during the subjective day yields KaiA(2-4):KaiC(6) complexes which stimulate KaiC autophosphorylation. Phospho-Ser-431 KaiC accumulation triggers binding of KaiB during the subjective night to form the KaiB(6):KaiC(6) complex, leading to changes in the output regulators CikA and SasA. KaiB(6):KaiC(6) formation exposes a site for KaiA binding on KaiB that sequesters KaiA from KaiC's CII domain, making the KaiC(6):KaiB(6):KaiA(12) complex resulting in KaiC autodephosphorylation. Complete dephosphorylation of KaiC leads to dissociation of KaiA(2):KaiB(1), completing 1 cycle of the Kai oscillator. The chain is Circadian clock oscillator protein KaiA from Nostoc sp. (strain PCC 7120 / SAG 25.82 / UTEX 2576).